The primary structure comprises 409 residues: Ingression protein 1 (409 aa).

The region spanning 1-114 is the C2 domain; sequence MSEEVWNGNQ…DPKEGYCTWY (114 aa). A disordered region spans residues 300–409; it reads LSYDEDDDDD…TRKRPPPRLS (110 aa). Acidic residues predominate over residues 302–313; sequence YDEDDDDDDEND. Polar residues predominate over residues 315–328; that stretch reads FYSSSHRVSHNYNQ. The segment covering 360 to 377 has biased composition (low complexity); the sequence is LDSSSPNSHPHPSGLNSP. Over residues 384-399 the composition is skewed to polar residues; the sequence is TTSNSNFNSRKNSMSP. Serine 392 carries the phosphoserine modification. The span at 400–409 shows a compositional bias: basic residues; it reads TRKRPPPRLS.

The protein belongs to the INN1/fic1 family. As to quaternary structure, interacts with CYK2, CYK3 and IQG1.

It is found in the bud neck. Required for the ingression of the plasma membrane into the bud neck at the end of cytokinesis, leading to the separation of the mother and daughter cells. Stimulates the synthesis of the primary septum (PS) by CHS2. In Saccharomyces cerevisiae (strain ATCC 204508 / S288c) (Baker's yeast), this protein is Ingression protein 1 (INN1).